We begin with the raw amino-acid sequence, 250 residues long: Probable transcriptional regulatory protein Cvib_1432 (250 aa).

It belongs to the TACO1 family.

It localises to the cytoplasm. This is Probable transcriptional regulatory protein Cvib_1432 from Chlorobium phaeovibrioides (strain DSM 265 / 1930) (Prosthecochloris vibrioformis (strain DSM 265)).